Here is a 390-residue protein sequence, read N- to C-terminus: Sorting nexin C1711.11 (390 aa).

A PX domain is found at 1 to 123 (MLKCTIKNEQ…QFLENNSWKS (123 aa)). A 1,2-diacyl-sn-glycero-3-phospho-(1D-myo-inositol-3-phosphate) is bound by residues arginine 44, lysine 70, and arginine 89.

The protein belongs to the sorting nexin family.

Its subcellular location is the cytoplasm. It localises to the membrane. This Schizosaccharomyces pombe (strain 972 / ATCC 24843) (Fission yeast) protein is Sorting nexin C1711.11.